Consider the following 599-residue polypeptide: Elongation factor 4 (599 aa).

The region spanning 2 to 184 (KNIRNFSIIA…RLVRDIPPPE (183 aa)) is the tr-type G domain. Residues 14-19 (DHGKST) and 131-134 (NKID) contribute to the GTP site.

Belongs to the TRAFAC class translation factor GTPase superfamily. Classic translation factor GTPase family. LepA subfamily.

It is found in the cell inner membrane. The enzyme catalyses GTP + H2O = GDP + phosphate + H(+). Required for accurate and efficient protein synthesis under certain stress conditions. May act as a fidelity factor of the translation reaction, by catalyzing a one-codon backward translocation of tRNAs on improperly translocated ribosomes. Back-translocation proceeds from a post-translocation (POST) complex to a pre-translocation (PRE) complex, thus giving elongation factor G a second chance to translocate the tRNAs correctly. Binds to ribosomes in a GTP-dependent manner. This Klebsiella pneumoniae subsp. pneumoniae (strain ATCC 700721 / MGH 78578) protein is Elongation factor 4.